The following is a 396-amino-acid chain: Probable sugar efflux transporter (396 aa).

A run of 12 helical transmembrane segments spans residues 15-35 (VVTL…PVGL), 50-70 (VGIM…PFML), 81-101 (LICL…SWSF), 103-123 (VLVI…SITA), 136-156 (AQAL…GLPL), 170-190 (FFAI…LLPL), 209-229 (PALM…YTAY), 246-266 (FATA…VIFG), 275-295 (ALVS…LPAA), 299-319 (IHLG…GLGM), 333-353 (VAMA…ALVG), and 364-384 (MIGY…IIIF).

This sequence belongs to the major facilitator superfamily. SotB (TC 2.A.1.2) family.

It is found in the cell inner membrane. In terms of biological role, involved in the efflux of sugars. The physiological role may be the reduction of the intracellular concentration of toxic sugars or sugar metabolites. The sequence is that of Probable sugar efflux transporter from Escherichia coli O127:H6 (strain E2348/69 / EPEC).